A 289-amino-acid polypeptide reads, in one-letter code: MYG1 protein CT_386 (289 aa).

The protein belongs to the MYG1 family.

This is MYG1 protein CT_386 from Chlamydia trachomatis serovar D (strain ATCC VR-885 / DSM 19411 / UW-3/Cx).